A 356-amino-acid polypeptide reads, in one-letter code: N-methyltransferase 4 (356 aa).

S-adenosyl-L-methionine is bound by residues 93–94 (QS), 128–136 (ILDIGCGFG), and 155–160 (TNSAEQ).

This sequence belongs to the CFA/CMAS family. As to expression, expressed in stems, roots, flower buds and leaves.

Its function is as follows. Probable N-methyltransferase not involved in benzylisoquinoline metabolism. Shows no detectable activity with (s)-coclaurine, (R)- or (S)-reticuline, papaverine or (R,S)-tetrahydropapaverine. This chain is N-methyltransferase 4 (NMT4), found in Papaver somniferum (Opium poppy).